Here is a 50-residue protein sequence, read N- to C-terminus: Large ribosomal subunit protein bL33 (50 aa).

The protein belongs to the bacterial ribosomal protein bL33 family.

The polypeptide is Large ribosomal subunit protein bL33 (Sulfurimonas denitrificans (strain ATCC 33889 / DSM 1251) (Thiomicrospira denitrificans (strain ATCC 33889 / DSM 1251))).